The primary structure comprises 735 residues: Transmembrane channel-like protein 7 (735 aa).

At 1–164 the chain is on the extracellular side; that stretch reads MSEFGAGAEL…QSYFSFLRFL (164 aa). A helical transmembrane segment spans residues 165 to 185; that stretch reads VLLNFLMFILMFSFVTLPAVI. At 186–233 the chain is on the cytoplasmic side; that stretch reads SNYGIFNSSSTKISPNNTEPYCTVYTPSGNKGLVYFYTYLKDLLTGTG. Residues 234–254 form a helical membrane-spanning segment; sequence FLEVTVLFYGYYTIDAAWFSV. Topologically, residues 255 to 258 are extracellular; it reads LRYN. A helical membrane pass occupies residues 259-279; the sequence is LPLAYLLTTFAYLALSFVWII. The Cytoplasmic portion of the chain corresponds to 280–355; the sequence is KRSVERFRQH…TMKEKLQIYS (76 aa). Residues 356–376 traverse the membrane as a helical segment; the sequence is LRIFINIIVIAVLSGCFYSIY. At 377–403 the chain is on the extracellular side; the sequence is RATVFSQENSSVSIRRNVMIANLLVQY. Asparagine 385 carries N-linked (GlcNAc...) asparagine glycosylation. The helical transmembrane segment at 404 to 424 threads the bilayer; it reads LPSIVITSANFIAPQIFSFLI. The Cytoplasmic segment spans residues 425-436; that stretch reads RFEDYSAAFEIR. A helical transmembrane segment spans residues 437-457; it reads LTLIRCVFVRLANVGVLLFSL. At 458-488 the chain is on the extracellular side; that stretch reads WSQIHCDNDQCKACGYDYELYPCWESAVGQE. The helical transmembrane segment at 489-509 threads the bilayer; sequence MYKLLIFDFMIIIAMTLFVDF. Residues 510-548 are Cytoplasmic-facing; sequence PRKLLVTYCSWKLVQWWGLQEFGISDNVLEIIYGQTICW. The helical transmembrane segment at 549–569 threads the bilayer; the sequence is IGTFFSPLLPAIATIKYFIIF. At 570–594 the chain is on the extracellular side; that stretch reads YIKKISLIHTRKPASRPIRASSSNF. A helical transmembrane segment spans residues 595–615; sequence FFLAVLLIGLILAFVPLGVSI. Residues 616-634 are Cytoplasmic-facing; sequence ALISSSKACGPFRNFNTSW. Residues 635–655 traverse the membrane as a helical segment; it reads AIVPYTILEFPIGLQKFLYGI. Residues 656–658 lie on the Extracellular side of the membrane; it reads ASE. The chain crosses the membrane as a helical span at residues 659–679; that stretch reads AFAVPFFVIACLFMFYFIALA. The Cytoplasmic portion of the chain corresponds to 680–735; it reads GAHKRVVEQLREQLVTESRDKLFLLEKLSEAQKNSGKPQKARKLTSSWLLEPLDKG. Residues 710 to 735 form a disordered region; that stretch reads AQKNSGKPQKARKLTSSWLLEPLDKG.

It belongs to the TMC family.

The protein resides in the membrane. In terms of biological role, probable component of an ion channel. The chain is Transmembrane channel-like protein 7 (Tmc7) from Gallus gallus (Chicken).